A 444-amino-acid polypeptide reads, in one-letter code: Tubulin beta 8B (444 aa).

An MREI motif motif is present at residues 1–4 (MREI). GTP-binding residues include Gln11, Glu69, Ser138, Gly142, Thr143, and Gly144. Mg(2+) is bound at residue Glu69. Ser172 carries the post-translational modification Phosphoserine; by CDK1. Residues Asn204 and Asn226 each contribute to the GTP site. The tract at residues 421–444 (EYQQYQDATAEEEEDEEYAEEEVA) is disordered. Over residues 429-444 (TAEEEEDEEYAEEEVA) the composition is skewed to acidic residues. A 5-glutamyl polyglutamate modification is found at Glu436.

Belongs to the tubulin family. As to quaternary structure, dimer of alpha and beta chains. A typical microtubule is a hollow water-filled tube with an outer diameter of 25 nm and an inner diameter of 15 nM. Alpha-beta heterodimers associate head-to-tail to form protofilaments running lengthwise along the microtubule wall with the beta-tubulin subunit facing the microtubule plus end conferring a structural polarity. Microtubules usually have 13 protofilaments but different protofilament numbers can be found in some organisms and specialized cells. The cofactor is Mg(2+). Post-translationally, some glutamate residues at the C-terminus are polyglutamylated, resulting in polyglutamate chains on the gamma-carboxyl group. Polyglutamylation plays a key role in microtubule severing by spastin (SPAST). SPAST preferentially recognizes and acts on microtubules decorated with short polyglutamate tails: severing activity by SPAST increases as the number of glutamates per tubulin rises from one to eight, but decreases beyond this glutamylation threshold. Glutamylation is also involved in cilia motility. In terms of processing, some glutamate residues at the C-terminus are monoglycylated but not polyglycylated due to the absence of functional TTLL10 in human. Monoglycylation is mainly limited to tubulin incorporated into cilia and flagella axonemes, which is required for their stability and maintenance. Flagella glycylation controls sperm motility. Both polyglutamylation and monoglycylation can coexist on the same protein on adjacent residues, and lowering glycylation levels increases polyglutamylation, and reciprocally. Phosphorylated on Ser-172 by CDK1 during the cell cycle, from metaphase to telophase, but not in interphase. This phosphorylation inhibits tubulin incorporation into microtubules.

The protein localises to the cytoplasm. The protein resides in the cytoskeleton. Functionally, tubulin is the major constituent of microtubules, a cylinder consisting of laterally associated linear protofilaments composed of alpha- and beta-tubulin heterodimers. Microtubules grow by the addition of GTP-tubulin dimers to the microtubule end, where a stabilizing cap forms. Below the cap, tubulin dimers are in GDP-bound state, owing to GTPase activity of alpha-tubulin. The polypeptide is Tubulin beta 8B (Homo sapiens (Human)).